A 133-amino-acid polypeptide reads, in one-letter code: Thioredoxin H2 (133 aa).

Residues 1–22 (MGGALSTVFGSGEDATAAGTES) are disordered. Residues 6–133 (STVFGSGEDA…LEKKVSKLRA (128 aa)) enclose the Thioredoxin domain. Active-site nucleophile residues include cysteine 59 and cysteine 62. Cysteine 59 and cysteine 62 are oxidised to a cystine.

The protein belongs to the thioredoxin family. Plant H-type subfamily. In terms of assembly, interacts with MDH1.

The protein resides in the cytoplasm. Its subcellular location is the mitochondrion. In terms of biological role, thiol-disulfide oxidoreductase probably involved in the redox regulation of a number of cytosolic enzymes. Possesses insulin disulfide bonds reducing activity. The chain is Thioredoxin H2 (TRX2) from Arabidopsis thaliana (Mouse-ear cress).